The chain runs to 398 residues: Isochorismate synthase DhbC (398 aa).

Residue Ser271 is modified to Phosphoserine.

The protein belongs to the isochorismate synthase family.

The enzyme catalyses chorismate = isochorismate. It functions in the pathway siderophore biosynthesis; bacillibactin biosynthesis. The sequence is that of Isochorismate synthase DhbC (dhbC) from Bacillus subtilis (strain 168).